The primary structure comprises 247 residues: uncharacterized protein (247 aa).

Low complexity-rich tracts occupy residues 1-12 and 21-43; these read MFSPQQPMRNYP and PNQRMMGRRPPNMRGPSFGAQQQ. Disordered regions lie at residues 1 to 43 and 157 to 247; these read MFSP…AQQQ and LSKS…RLYI. 2 stretches are compositionally biased toward basic and acidic residues: residues 170-196 and 210-229; these read ESEKQSVSEESSEKEKETETKTSDGNK and KTTDNKEQELKTSAPKKKEA.

This is an uncharacterized protein from Bacillus subtilis (strain 168).